Reading from the N-terminus, the 101-residue chain is Small ribosomal subunit protein bS18c (101 aa).

A compositionally biased stretch (basic residues) spans 1–19 (MDKSKRPFRKSKRSFRRRL). Positions 1-23 (MDKSKRPFRKSKRSFRRRLPPIG) are disordered.

This sequence belongs to the bacterial ribosomal protein bS18 family. As to quaternary structure, part of the 30S ribosomal subunit.

It is found in the plastid. Its subcellular location is the chloroplast. The polypeptide is Small ribosomal subunit protein bS18c (Ceratophyllum demersum (Rigid hornwort)).